A 360-amino-acid chain; its full sequence is Peptide chain release factor 1 (360 aa).

Glutamine 235 bears the N5-methylglutamine mark.

It belongs to the prokaryotic/mitochondrial release factor family. Methylated by PrmC. Methylation increases the termination efficiency of RF1.

It is found in the cytoplasm. Peptide chain release factor 1 directs the termination of translation in response to the peptide chain termination codons UAG and UAA. This Blochmanniella pennsylvanica (strain BPEN) protein is Peptide chain release factor 1.